The following is a 104-amino-acid chain: L-rhamnose mutarotase (104 aa).

Tyr-18 contributes to the substrate binding site. His-22 (proton donor) is an active-site residue. Substrate is bound by residues Tyr-41 and 76-77; that span reads WW.

This sequence belongs to the rhamnose mutarotase family. As to quaternary structure, homodimer.

It is found in the cytoplasm. It catalyses the reaction alpha-L-rhamnose = beta-L-rhamnose. It participates in carbohydrate metabolism; L-rhamnose metabolism. In terms of biological role, involved in the anomeric conversion of L-rhamnose. This is L-rhamnose mutarotase from Burkholderia ambifaria (strain MC40-6).